A 296-amino-acid polypeptide reads, in one-letter code: MFS-type transporter pytF (296 aa).

Helical transmembrane passes span 30 to 50 (WLVV…LNSF), 72 to 92 (WIGS…GPVF), 98 to 118 (KVLF…VSLC), 124 to 144 (FILA…YPTI), 157 to 177 (LAMG…PLIL), 180 to 200 (LFAV…SFAL), and 238 to 258 (VVGM…IPLF). The N-linked (GlcNAc...) asparagine glycan is linked to N265. The helical transmembrane segment at 271-291 (SLISILNAGSFVGRIVSGALA) threads the bilayer.

Belongs to the major facilitator superfamily. Monocarboxylate porter (TC 2.A.1.13) family.

It localises to the cell membrane. Its function is as follows. MFS-type transporter; part of the gene cluster that mediates the biosynthesis of pyranterreones, a family of antioxidative compounds. Directly involved in the secretion of pyranterreones. This Aspergillus terreus (strain NIH 2624 / FGSC A1156) protein is MFS-type transporter pytF.